Reading from the N-terminus, the 205-residue chain is MRSPYLIGVFLAAGKSRRMGQNKLALPLKGENIGSLSLKTALSSRLDHVLVVERTEHASLEWIGAPYHAPPFQKRWSLHVCQDAEKGQGHSVSSGVRKAESMGADGIVILLADQPQLSVDHLNALVALAPESFAVSSFLGAFTPPIYFSSTCFPYVKGLKGDEGARRLLKSGQLGAGAVLEAKDSGELDDIDTPEEYDMVRRAMS.

It functions in the pathway purine metabolism; hypoxanthine degradation. Required for xanthine dehydrogenase activity. Could be involved in formation of the molybdenum cofactor required by xanthine dehydrogenase. This is Purine catabolism protein PucB (pucB) from Bacillus subtilis (strain 168).